Here is a 440-residue protein sequence, read N- to C-terminus: Indoleamine 2,3-dioxygenase qulI (440 aa).

His347 is a binding site for heme.

It belongs to the indoleamine 2,3-dioxygenase family. As to quaternary structure, monomer. It depends on heme as a cofactor.

It catalyses the reaction D-tryptophan + O2 = N-formyl-D-kynurenine. The catalysed reaction is L-tryptophan + O2 = N-formyl-L-kynurenine. Its pathway is secondary metabolite biosynthesis. Its function is as follows. Indoleamine 2,3-dioxygenase; part of the gene cluster that mediates the biosynthesis of quinolactacin A2 (QUL A2), a fungal alkaloid that features a quinolone-gamma-lactam hybrid, which is a potential pharmacophore for the treatment of cancer and Alzheimer's disease. The quinolone-gamma-lactam hybrid scaffold is synthesized from the combination of L-isoleucine (L-Ile) and the nonproteinogenic amino acid L-kynurenine, followed by quinolone cyclization, oxidative decarboxylation, and lactam formation. Additionally, the N-methyl group is derived from methionine, which might be catalyzed by an S-adenosylmethionine (SAM)-dependent methyltransferase. Bioconversion of L-tryptophan to L-kynurenine could be catalyzed by the indoleamine-2,3-dioxygenase (IDO) qulI to produce an unstable product, N-formyl-L-kynurenine, followed by kynurenine formamidase catalyzed hydrolysis. QulM then acts as a methyltransferase that methylates L-kynurenine at the N-4 position. The FMN-dependent alpha-hydroxy acid dehydrogenase qulF than functions as an oxidative decarboxylase which converts N-methylkynurenine into 2-aminobenzoylacetamide via 2 tandem reactions, including dehydrogenation and decarboxylation. An amidase located outside of the qul gene cluster further produces the unstable beta-keto acid precursor N-methyl-2-aminobenzoylacetate, which could be spontaneously dehydrated to form N-methyl-4-hydroxy-2-quinolone. The NRPS qulB is able to incorporate N-methyl-2-aminobenzoylacetate and efficiently compete with the spontaneous reaction. By further extending the beta-keto acid with L-Ile, qulA performs a Dieckmann condensation to form the gamma-lactam ring and release a 4-ketopyrrolidinone intermediate from the assembly line. This intermediate could plausibly further undergo a spontaneous cyclization to yield the final quinolone-gamma-lactam hybrid structure. The polypeptide is Indoleamine 2,3-dioxygenase qulI (Penicillium citrinum).